A 747-amino-acid chain; its full sequence is Protein Niban 2 (747 aa).

Residue glycine 2 is the site of N-myristoyl glycine attachment. The PH domain maps to 68–192 (RIIFSGNLFQ…WQAVLQDCVR (125 aa)). 2 positions are modified to phosphoserine: serine 568 and serine 574. The disordered stretch occupies residues 589 to 747 (WGEQYGDGGD…EDSAGVQTEF (159 aa)). Positions 593 to 602 (YGDGGDGSDS) are enriched in gly residues. A phosphoserine mark is found at serine 605, serine 626, serine 641, serine 645, serine 648, serine 667, serine 672, serine 683, serine 693, and serine 697. Over residues 708-722 (VDLEPPKPSDQETGE) the composition is skewed to basic and acidic residues. A compositionally biased stretch (polar residues) spans 734–747 (HTTTEDSAGVQTEF).

The protein belongs to the Niban family. In terms of processing, as apoptosis proceeds, degraded via an proteasome-independent pathway, probably by caspases.

It is found in the cytoplasm. The protein resides in the cytosol. It localises to the cell junction. The protein localises to the adherens junction. Its subcellular location is the membrane. In terms of biological role, may play a role in apoptosis suppression. The polypeptide is Protein Niban 2 (Rattus norvegicus (Rat)).